Reading from the N-terminus, the 271-residue chain is MCSLATNLLLPSKMKPVFPEKLSTSSLCVTTRRSKMKNRSIVPVARLFGPAIFEASKLKVLFLGVDEKKHPAKLPRTYTLTHSDITAKLTLAISQSINNSQLQGWANKLFRDEVVGEWKKVKGKMSLHVHCHISGGHFFLNLIAKLRYYIFCKELPVVLEAFAHGDEYLLNNHPELQESPVWVYFHSNIPEYNKVECWGPLWEAMSQHQHDGRTHKKSETLPELPCPDECKCCFPTVSTIPWSHRHYQHTAADENVADGLLEIPNPGKSKG.

Residues 1–54 (MCSLATNLLLPSKMKPVFPEKLSTSSLCVTTRRSKMKNRSIVPVARLFGPAIFE) constitute a chloroplast transit peptide.

The protein belongs to the staygreen family. In terms of assembly, interacts with the light harvesting complex II (LHCII). Interacts with the chlorophyll catabolic enzyme (CCE) RCCR.

The protein resides in the plastid. The protein localises to the chloroplast thylakoid membrane. The catalysed reaction is chlorophyll a + 2 H(+) = pheophytin a + Mg(2+). In terms of biological role, magnesium chelatase involved in chlorophyll a degradation in the chlorophyll-protein complexes of photosystem I (PSI) and photosystem II (PSII). Contributes to the degradation of PSI and PSII in the thylakoid membranes. Required to trigger chlorophyll degradation during natural and dark-induced leaf senescence. Mediates chlorophyll degradation during embryo degreening. Recombinant SGR2 possesses high dechelating activity against chlorophyll a, very low activity against chlorophyllide a, and no activity against chlorophyll b. This is Magnesium dechelatase SGR2, chloroplastic from Arabidopsis thaliana (Mouse-ear cress).